The primary structure comprises 227 residues: UPF0173 metal-dependent hydrolase BCB4264_A4722 (227 aa).

The protein belongs to the UPF0173 family.

This chain is UPF0173 metal-dependent hydrolase BCB4264_A4722, found in Bacillus cereus (strain B4264).